Here is a 354-residue protein sequence, read N- to C-terminus: MGALAGNPDAGLAVLADVSEDAAEKARHLVDSGAVELTVADVDDDLYAETVLHLDGHHARACIAGDHTNVFLVSRDDEVLESKERPAAGHVPPTAALLQGLSLAKIYDFATTVDIERIEFITEAERLNSALVDAGRDGSYGIGEGAAILGSIDRGMASDDLCTRMTAYTAAASDARMGGAPLPAMTNSGSGNQGIVATVPVTVAADYAGVDHERRVRALALSHAVALYAHAGLPVLSAFCAATTAAMGAAAGICLVLDGSYSAVERAVASMTGDVVGMVCDGAGCSCALKVSASANAAGRAALLSLAGRRVPGTNGLVHDDVDAAIRGIGRLGTEGMKQTDPEILSLMMAKQTV.

The protein belongs to the UPF0597 family.

The sequence is that of UPF0597 protein PPA0217 from Cutibacterium acnes (strain DSM 16379 / KPA171202) (Propionibacterium acnes).